The following is a 503-amino-acid chain: MDLIPGFSTETWVLLATSLVLLYLYGTYSHGLFKKLGIPGPRPLPYFGNILGYRKGVDHFDKKCFQQYGKMWGVYDGRQPLLAVTDPNMIKSVLVKECYSVFTNRRSFGPLGAMRNALSLAEDEEWKRIRTLLSPTFTSGKLKEMFPIISHYGDLLVSNLRKEAEKGKPVTMKDIFGAYSMDVITSTAFGVNIDSLNNPQDPFVENSKKLLKFSFFDPFLLSLIFFPFLTPIFEVLNITLFPKSSVNFFTKSVKRMKESRLTDQQKRRVDLLQLMINSQNSKEMDPHKSLSNEELVAQGIIFIFAGYETTSSALSLLAYELATHPDVQQKLQEEIEATFPNKAPPTYDALAQMEYLDMVVNETLRLYPIAARLERACKKDVEIHGVFVPKGTVVVVPVFVLHRDPDLWPEPEEFRPERFSKKHKDTINPYTYLPFGTGPRNCIGMRFALMNMKLALVRVLQNFSFKPCKETQIPLKLTTQGLTQPEKPVVLKILPRDGTVSGA.

Heme is bound at residue cysteine 442.

Belongs to the cytochrome P450 family. It depends on heme as a cofactor.

It localises to the endoplasmic reticulum membrane. The protein localises to the microsome membrane. The catalysed reaction is an organic molecule + reduced [NADPH--hemoprotein reductase] + O2 = an alcohol + oxidized [NADPH--hemoprotein reductase] + H2O + H(+). Cytochromes P450 are a group of heme-thiolate monooxygenases. In liver microsomes, this enzyme is involved in an NADPH-dependent electron transport pathway. It oxidizes a variety of structurally unrelated compounds, including steroids, fatty acids, and xenobiotics. The chain is Cytochrome P450 3A29 (CYP3A29) from Sus scrofa (Pig).